The sequence spans 772 residues: Ribosomal protein S6 kinase alpha-4 (772 aa).

One can recognise a Protein kinase 1 domain in the interval 33 to 301 (FELLKVLGTG…AQEVRNHPFF (269 aa)). ATP-binding positions include 39 to 47 (LGTGAYGKV) and Lys-65. The active-site Proton acceptor is the Asp-161. Ser-196 bears the Phosphoserine; by autocatalysis mark. Residues 302–371 (QGLDWVALAA…VAPSILFDHN (70 aa)) enclose the AGC-kinase C-terminal domain. The residue at position 343 (Ser-343) is a Phosphoserine; by MAPK1, MAPK3 and MAPK14. Residue Ser-347 is modified to Phosphoserine. Ser-360 and Ser-365 each carry phosphoserine; by autocatalysis. Residues 411–674 (DLREPALGQG…LEGLRGSSWL (264 aa)) enclose the Protein kinase 2 domain. Residues 417-425 (LGQGSFSVC) and Lys-440 each bind ATP. Residue Asp-530 is the Proton acceptor of the active site. Position 542 is a phosphothreonine (Thr-542). Thr-568 is modified (phosphothreonine; by MAPK1, MAPK3 and MAPK14). A phosphoserine mark is found at Ser-634 and Ser-678. 2 disordered regions span residues 673–696 (WLQDGSARSSPPLRTPDVLESSGP) and 728–772 (AKRR…LPPS). A Phosphothreonine modification is found at Thr-687. The required for nuclear targeting and association with MAPK14 stretch occupies residues 725-772 (APLAKRRKQKLRSATASRRGSPAPANPGRAPVASKGAPRRANGPLPPS). A Phosphoserine; by autocatalysis modification is found at Ser-737. A Phosphoserine modification is found at Ser-745.

It belongs to the protein kinase superfamily. AGC Ser/Thr protein kinase family. S6 kinase subfamily. As to quaternary structure, forms a complex with either MAPK1/ERK2 or MAPK3/ERK1 in quiescent cells which transiently dissociates following mitogenic stimulation. Also associates with MAPK14/p38-alpha. Activated RPS6KA4 associates with and phosphorylates the NF-kappa-B p65 subunit RELA. The cofactor is Mg(2+). Ser-343 and Thr-568 phosphorylation is required for kinase activity. Ser-343 and Ser-196 are autophosphorylated by the C-terminal kinase domain, and their phosphorylation is essential for the catalytic activity of the N-terminal kinase domain. Phosphorylated at Ser-343, Thr-568 and Thr-687 by MAPK1/ERK2, MAPK3/ERK1 and MAPK14/p38-alpha. Autophosphorylated at Ser-737 and Ser-745 by the N-terminal kinase domain.

The protein localises to the nucleus. It carries out the reaction L-seryl-[protein] + ATP = O-phospho-L-seryl-[protein] + ADP + H(+). It catalyses the reaction L-threonyl-[protein] + ATP = O-phospho-L-threonyl-[protein] + ADP + H(+). With respect to regulation, activated by phosphorylation at Ser-343, Thr-568 and Thr-687 by MAPK1/ERK2, MAPK3/ERK1 and MAPK14/p38-alpha, and by further autophosphorylation of Ser-196, Ser-360 and Ser-365 by the activated C-terminal kinase domain. In terms of biological role, serine/threonine-protein kinase that is required for the mitogen or stress-induced phosphorylation of the transcription factors CREB1 and ATF1 and for the regulation of the transcription factor RELA, and that contributes to gene activation by histone phosphorylation and functions in the regulation of inflammatory genes. Phosphorylates CREB1 and ATF1 in response to mitogenic or stress stimuli such as UV-C irradiation, epidermal growth factor (EGF) and anisomycin. Plays an essential role in the control of RELA transcriptional activity in response to TNF. Phosphorylates 'Ser-10' of histone H3 in response to mitogenics, stress stimuli and EGF, which results in the transcriptional activation of several immediate early genes, including proto-oncogenes c-fos/FOS and c-jun/JUN. May also phosphorylate 'Ser-28' of histone H3. Mediates the mitogen- and stress-induced phosphorylation of high mobility group protein 1 (HMGN1/HMG14). In lipopolysaccharide-stimulated primary macrophages, acts downstream of the Toll-like receptor TLR4 to limit the production of pro-inflammatory cytokines. Functions probably by inducing transcription of the MAP kinase phosphatase DUSP1 and the anti-inflammatory cytokine interleukin 10 (IL10), via CREB1 and ATF1 transcription factors. This chain is Ribosomal protein S6 kinase alpha-4 (RPS6KA4), found in Homo sapiens (Human).